The chain runs to 482 residues: Cobyrinate a,c-diamide synthase (482 aa).

Positions 248–441 (RLAIAQDQAF…LHLHWGSQIS (194 aa)) constitute a GATase cobBQ-type domain. Residue Cys331 is the Nucleophile of the active site.

This sequence belongs to the CobB/CbiA family. Mg(2+) serves as cofactor.

The catalysed reaction is cob(II)yrinate + 2 L-glutamine + 2 ATP + 2 H2O = cob(II)yrinate a,c diamide + 2 L-glutamate + 2 ADP + 2 phosphate + 2 H(+). Its pathway is cofactor biosynthesis; adenosylcobalamin biosynthesis; cob(II)yrinate a,c-diamide from sirohydrochlorin (anaerobic route): step 10/10. Functionally, catalyzes the ATP-dependent amidation of the two carboxylate groups at positions a and c of cobyrinate, using either L-glutamine or ammonia as the nitrogen source. This Synechocystis sp. (strain ATCC 27184 / PCC 6803 / Kazusa) protein is Cobyrinate a,c-diamide synthase.